Here is a 441-residue protein sequence, read N- to C-terminus: Proline--tRNA ligase (441 aa).

The protein belongs to the class-II aminoacyl-tRNA synthetase family. ProS type 2 subfamily. In terms of assembly, homodimer.

The protein resides in the cytoplasm. It catalyses the reaction tRNA(Pro) + L-proline + ATP = L-prolyl-tRNA(Pro) + AMP + diphosphate. Functionally, catalyzes the attachment of proline to tRNA(Pro) in a two-step reaction: proline is first activated by ATP to form Pro-AMP and then transferred to the acceptor end of tRNA(Pro). The sequence is that of Proline--tRNA ligase from Methylorubrum extorquens (strain PA1) (Methylobacterium extorquens).